Consider the following 142-residue polypeptide: Lutropin subunit beta (142 aa).

Positions 1-21 are cleaved as a signal peptide; it reads MEMLQGLLLLWLLLNVGGVWT. 6 disulfide bridges follow: C30/C78, C44/C93, C47/C131, C55/C109, C59/C111, and C114/C121. N34 carries an N-linked (GlcNAc...) asparagine glycan.

This sequence belongs to the glycoprotein hormones subunit beta family. As to quaternary structure, heterodimer of a common alpha chain and a unique beta chain which confers biological specificity to thyrotropin, lutropin, follitropin and gonadotropin.

The protein resides in the secreted. Functionally, promotes spermatogenesis and ovulation by stimulating the testes and ovaries to synthesize steroids. This is Lutropin subunit beta (LHB) from Panthera tigris altaica (Siberian tiger).